The sequence spans 365 residues: 3-isopropylmalate dehydrogenase (365 aa).

Substrate is bound by residues R96, R106, R134, and D224. Mg(2+)-binding residues include D224, D248, and D252. G288–N300 is an NAD(+) binding site.

Belongs to the isocitrate and isopropylmalate dehydrogenases family. LeuB type 1 subfamily. In terms of assembly, homodimer. The cofactor is Mg(2+). Mn(2+) is required as a cofactor.

It localises to the cytoplasm. The catalysed reaction is (2R,3S)-3-isopropylmalate + NAD(+) = 4-methyl-2-oxopentanoate + CO2 + NADH. Its pathway is amino-acid biosynthesis; L-leucine biosynthesis; L-leucine from 3-methyl-2-oxobutanoate: step 3/4. Its function is as follows. Catalyzes the oxidation of 3-carboxy-2-hydroxy-4-methylpentanoate (3-isopropylmalate) to 3-carboxy-4-methyl-2-oxopentanoate. The product decarboxylates to 4-methyl-2 oxopentanoate. The polypeptide is 3-isopropylmalate dehydrogenase (Dehalococcoides mccartyi (strain ATCC BAA-2266 / KCTC 15142 / 195) (Dehalococcoides ethenogenes (strain 195))).